Consider the following 866-residue polypeptide: Dimethylglycine dehydrogenase, mitochondrial (866 aa).

The transit peptide at 1 to 50 (MLRPGAQLLRGLLLRSCPLQGSPGRPRSVCGREGEEKPPLSAETQWKDRA) directs the protein to the mitochondrion. Positions 20–42 (QGSPGRPRSVCGREGEEKPPLSA) are disordered. Residues 59-60 (CV), 80-81 (EK), and 87-95 (GSTWHAAGL) contribute to the FAD site. A Tele-8alpha-FAD histidine modification is found at His-91. An N6-acetyllysine modification is found at Lys-114. The residue at position 148 (Lys-148) is an N6-acetyllysine; alternate. Residue Lys-148 is modified to N6-succinyllysine; alternate. Lys-168 is subject to N6-acetyllysine. Val-219 lines the FAD pocket. Lys-223 carries the post-translational modification N6-acetyllysine. FAD is bound at residue Trp-251. N6-succinyllysine is present on residues Lys-317 and Lys-319. 2 positions are modified to N6-acetyllysine: Lys-335 and Lys-360. Residue 397-402 (FGYGII) coordinates FAD. N6-acetyllysine; alternate is present on residues Lys-434 and Lys-523. Lys-434 and Lys-523 each carry N6-succinyllysine; alternate. 580-582 (ELT) contributes to the (6S)-5,6,7,8-tetrahydrofolate binding site. Lys-655 is subject to N6-acetyllysine; alternate. An N6-succinyllysine; alternate modification is found at Lys-655. Residues Tyr-676, 683-685 (ELY), and Tyr-744 contribute to the (6S)-5,6,7,8-tetrahydrofolate site. An N6-acetyllysine modification is found at Lys-764. At Lys-795 the chain carries N6-succinyllysine.

Belongs to the GcvT family. In terms of assembly, monomer. It depends on FAD as a cofactor.

The protein resides in the mitochondrion. It carries out the reaction (6S)-5,6,7,8-tetrahydrofolyl-(gamma-L-Glu)(n) + N,N-dimethylglycine + oxidized [electron-transfer flavoprotein] + H(+) = (6R)-5,10-methylenetetrahydrofolyl-(gamma-L-Glu)(n) + sarcosine + reduced [electron-transfer flavoprotein]. It participates in amine and polyamine degradation; betaine degradation; sarcosine from betaine: step 2/2. Functionally, catalyzes the demethylation of N,N-dimethylglycine to sarcosine. Also has activity with sarcosine in vitro. This is Dimethylglycine dehydrogenase, mitochondrial (DMGDH) from Homo sapiens (Human).